The chain runs to 221 residues: Endo-1,4-beta-xylanase 2 (221 aa).

The signal sequence occupies residues 1–19 (MVAFTSLLAGFAAIAGVLS). The region spanning 32–221 (QTIGPGTGYS…SSGSASITVS (190 aa)) is the GH11 domain. 2 N-linked (GlcNAc...) asparagine glycosylation sites follow: asparagine 69 and asparagine 92. Residue glutamate 117 is the Nucleophile of the active site. Glutamate 208 (proton donor) is an active-site residue.

Belongs to the glycosyl hydrolase 11 (cellulase G) family.

It localises to the secreted. It catalyses the reaction Endohydrolysis of (1-&gt;4)-beta-D-xylosidic linkages in xylans.. It functions in the pathway glycan degradation; xylan degradation. Endo-1,4-beta-xylanase involved in the hydrolysis of xylan, a major structural heterogeneous polysaccharide found in plant biomass representing the second most abundant polysaccharide in the biosphere, after cellulose. This Trichoderma harzianum (Hypocrea lixii) protein is Endo-1,4-beta-xylanase 2 (Xyn2).